The chain runs to 333 residues: Structure-specific endonuclease subunit SLX1 homolog (333 aa).

In terms of domain architecture, GIY-YIG spans 68-157 (DFFGVYCLLS…KSRRLRLLNL (90 aa)). The segment at 237 to 293 (CSLCLKPILSISELLRCHANETCKSHFHMRCLSKHALNAVDEYRTSLFPIQGQCPKC) adopts an SLX1-type zinc-finger fold.

The protein belongs to the SLX1 family. As to quaternary structure, forms a heterodimer with a member of the SLX4 family. Requires a divalent metal cation as cofactor.

Its subcellular location is the nucleus. Catalytic subunit of a heterodimeric structure-specific endonuclease that resolves DNA secondary structures generated during DNA repair and recombination. Has endonuclease activity towards branched DNA substrates, introducing single-strand cuts in duplex DNA close to junctions with ss-DNA. The sequence is that of Structure-specific endonuclease subunit SLX1 homolog from Brugia malayi (Filarial nematode worm).